Reading from the N-terminus, the 156-residue chain is ATP synthase subunit b (156 aa).

The chain crosses the membrane as a helical span at residues 7–27 (LFVQAIVFLILVLFTMKFVWP).

This sequence belongs to the ATPase B chain family. F-type ATPases have 2 components, F(1) - the catalytic core - and F(0) - the membrane proton channel. F(1) has five subunits: alpha(3), beta(3), gamma(1), delta(1), epsilon(1). F(0) has three main subunits: a(1), b(2) and c(10-14). The alpha and beta chains form an alternating ring which encloses part of the gamma chain. F(1) is attached to F(0) by a central stalk formed by the gamma and epsilon chains, while a peripheral stalk is formed by the delta and b chains.

Its subcellular location is the cell inner membrane. Its function is as follows. F(1)F(0) ATP synthase produces ATP from ADP in the presence of a proton or sodium gradient. F-type ATPases consist of two structural domains, F(1) containing the extramembraneous catalytic core and F(0) containing the membrane proton channel, linked together by a central stalk and a peripheral stalk. During catalysis, ATP synthesis in the catalytic domain of F(1) is coupled via a rotary mechanism of the central stalk subunits to proton translocation. Component of the F(0) channel, it forms part of the peripheral stalk, linking F(1) to F(0). The sequence is that of ATP synthase subunit b from Paracidovorax citrulli (strain AAC00-1) (Acidovorax citrulli).